Here is a 131-residue protein sequence, read N- to C-terminus: 23S rRNA-specific endonuclease VapC20 (131 aa).

Positions 2–125 (IFVDTSFWAA…FDGDFSAAGF (124 aa)) constitute a PINc domain. Asp5 and Asp98 together coordinate Mg(2+).

It belongs to the PINc/VapC protein family. Requires Mg(2+) as cofactor.

Toxic component of a type II toxin-antitoxin (TA) system. An endoribonuclease that cleaves 23S rRNA in the sarcin-ricin loop (SRL). The SRL sequence is highly conserved and is implicated in GTP hydrolysis by EF-Tu and EF-G. Acts on purified ribosomes but not on isolated RNA. Its toxic effect is neutralized by coexpression with cognate antitoxin VapB20. In Mycobacterium tuberculosis (strain CDC 1551 / Oshkosh), this protein is 23S rRNA-specific endonuclease VapC20 (vapC20).